Reading from the N-terminus, the 628-residue chain is E3 SUMO-protein ligase PIAS3 (628 aa).

An interaction with CCAR2 region spans residues 1–200 (MAELGELKHM…QLRFCLCETS (200 aa)). The region spanning 11-45 (VMSFRVSELQVLLGFAGRNKSGRKHELLAKALHLL) is the SAP domain. An LXXLL motif motif is present at residues 19–23 (LQVLL). Glycyl lysine isopeptide (Lys-Gly) (interchain with G-Cter in SUMO2) cross-links involve residues K46 and K56. A disordered region spans residues 72–95 (PSDLSLLSLPPGTSPVGSPSPLAS). A PINIT domain is found at 115 to 280 (MHPPLPQPVH…SLSVYLVRQL (166 aa)). Residues K230 and K307 each participate in a glycyl lysine isopeptide (Lys-Gly) (interchain with G-Cter in SUMO2) cross-link. The SP-RING-type zinc finger occupies 312–393 (PDSEVATTSL…FMEILNSCSD (82 aa)). Zn(2+) is bound by residues C343, H345, C366, and C369. An SUMO1-binding region spans residues 450–460 (LTIESSSDEED). Residues K466 and K482 each participate in a glycyl lysine isopeptide (Lys-Gly) (interchain with G-Cter in SUMO2) cross-link. Residues 573–618 (LAPTLGSSHRSATPAPAPGRVSSIVAPGSSLREGHGGPLPSGPSLT) are disordered.

This sequence belongs to the PIAS family. In terms of assembly, binds SUMO1 and UBE2I. Interacts with AR, BCL11A, GFI1, HMGA2, IRF1, MITF, NCOA2, as well as with STAT3, after treatment with IL6, CNTF or OSM and with STAT5, after PRL stimulation. Interacts with PLAG1. Interacts with ZFHX3. Interacts with MTA1. Interacts with CCAR2 (via N-terminus). Interacts with TRIM8. Interacts with PRDM1. In terms of processing, sumoylated. In terms of tissue distribution, widely expressed, with highest levels in lung, kidney and spleen.

The protein resides in the cytoplasm. The protein localises to the nucleus. It is found in the nucleus speckle. Its pathway is protein modification; protein sumoylation. Functionally, functions as an E3-type small ubiquitin-like modifier (SUMO) ligase, stabilizing the interaction between UBE2I and the substrate, and as a SUMO-tethering factor. Plays a crucial role as a transcriptional coregulation in various cellular pathways, including the STAT pathway and the steroid hormone signaling pathway. The effects of this transcriptional coregulation, transactivation or silencing, may vary depending upon the biological context. Enhances the sumoylation of MTA1 and may participate in its paralog-selective sumoylation. Sumoylates CCAR2 which promotes its interaction with SIRT1. Diminishes the sumoylation of ZFHX3 by preventing the colocalization of ZFHX3 with SUMO1 in the nucleus. This is E3 SUMO-protein ligase PIAS3 (Pias3) from Rattus norvegicus (Rat).